The sequence spans 269 residues: Tetrahydromethanopterin S-methyltransferase subunit C (269 aa).

8 helical membrane passes run 18-38, 39-59, 62-82, 84-104, 106-126, 152-172, 180-200, and 222-242; these read VLVIGAVLSLIGMYIAHFVPS, LAMLLGGLLAAGACVAGANTT, VAAYGLGTGVPSIGMVSLGMG, ISALAGVLIPSVLAGSVALPF, LVLATPIIAAVVAIIVGFIVG, ALAILGFCTAFAGGFSADLII, IIALAFIAAGMSILHPFNACI, and LVFSIAKLDIVSILVAAVFWI.

The protein belongs to the MtrC family. The complex is composed of 8 subunits; MtrA, MtrB, MtrC, MtrD, MtrE, MtrF, MtrG and MtrH.

It localises to the cell membrane. The enzyme catalyses 5-methyl-5,6,7,8-tetrahydromethanopterin + coenzyme M + 2 Na(+)(in) = 5,6,7,8-tetrahydromethanopterin + methyl-coenzyme M + 2 Na(+)(out). It participates in one-carbon metabolism; methanogenesis from CO(2); methyl-coenzyme M from 5,10-methylene-5,6,7,8-tetrahydromethanopterin: step 2/2. Functionally, part of a complex that catalyzes the formation of methyl-coenzyme M and tetrahydromethanopterin from coenzyme M and methyl-tetrahydromethanopterin. This is an energy-conserving, sodium-ion translocating step. This chain is Tetrahydromethanopterin S-methyltransferase subunit C, found in Methanococcus vannielii (strain ATCC 35089 / DSM 1224 / JCM 13029 / OCM 148 / SB).